The chain runs to 467 residues: Pentatricopeptide repeat-containing protein At1g77170, mitochondrial (467 aa).

The N-terminal 30 residues, 1–30 (MFFSGLISKLHVHGTKRTNHFTIFHRLNHF), are a transit peptide targeting the mitochondrion. PPR repeat units follow at residues 81–115 (IAFL…TVLP), 116–150 (DRYS…GFVG), 151–181 (DEFC…NPER), 182–216 (KLGS…GLEP), 217–251 (DDFT…KTEE), 254–284 (DIMM…MRQR), 285–319 (NVVS…GVRP), 320–350 (NKIT…MKSE), and 356–386 (GLSH…MPMK). Positions 391-466 (VWGCLMGGCE…IPAYSYASTT (76 aa)) are type E motif.

It belongs to the PPR family. PCMP-E subfamily.

It localises to the mitochondrion. The polypeptide is Pentatricopeptide repeat-containing protein At1g77170, mitochondrial (PCMP-E21) (Arabidopsis thaliana (Mouse-ear cress)).